The chain runs to 202 residues: Ribosome maturation factor RimP (202 aa).

Belongs to the RimP family.

It is found in the cytoplasm. Required for maturation of 30S ribosomal subunits. This is Ribosome maturation factor RimP from Polaromonas naphthalenivorans (strain CJ2).